Consider the following 99-residue polypeptide: Large ribosomal subunit protein bL21 (99 aa).

It belongs to the bacterial ribosomal protein bL21 family. As to quaternary structure, part of the 50S ribosomal subunit. Contacts protein L20.

Functionally, this protein binds to 23S rRNA in the presence of protein L20. This chain is Large ribosomal subunit protein bL21, found in Mycoplasmopsis pulmonis (strain UAB CTIP) (Mycoplasma pulmonis).